A 495-amino-acid polypeptide reads, in one-letter code: Catalase B (495 aa).

The disordered stretch occupies residues 1 to 25 (MSNNKKLTSLFGAPVSDRENSMTAG). Active-site residues include His55 and Asn128. Residue Tyr338 coordinates heme.

The protein belongs to the catalase family. Homodimer. Heme is required as a cofactor.

It carries out the reaction 2 H2O2 = O2 + 2 H2O. Functionally, decomposes hydrogen peroxide into water and oxygen; serves to protect cells from the toxic effects of hydrogen peroxide. This Staphylococcus xylosus protein is Catalase B (katB).